A 376-amino-acid polypeptide reads, in one-letter code: Alpha-2,8-sialyltransferase 8E (376 aa).

Residues 1 to 17 (MRYADPSANRDLLGSRT) are Cytoplasmic-facing. The helical; Signal-anchor for type II membrane protein transmembrane segment at 18 to 38 (LLFIFICAFALVTLLQQILYG) threads the bilayer. At 39-376 (RNYIKRYFEF…RVHTGTCSCC (338 aa)) the chain is on the lumenal side. N-linked (GlcNAc...) asparagine glycosylation is found at N56 and N96. 2 disulfide bridges follow: C164-C313 and C178-C373. Residues N192 and 214–216 (NPS) each bind substrate. N-linked (GlcNAc...) asparagine glycans are attached at residues N241 and N284. 300-302 (STG) serves as a coordination point for substrate. The active-site Proton donor/acceptor is H348.

This sequence belongs to the glycosyltransferase 29 family. In terms of tissue distribution, expressed in fetal and adult brain, adult heart and skeletal muscle. Expressed in fetal and adult brain, not detected in adult heart and skeletal muscle.

Its subcellular location is the golgi apparatus membrane. The catalysed reaction is a ganglioside GT1b (d18:1(4E)) + CMP-N-acetyl-beta-neuraminate = a ganglioside GQ1b (d18:1(4E)) + CMP + H(+). The enzyme catalyses a ganglioside GD3 (d18:1(4E)) + CMP-N-acetyl-beta-neuraminate = a ganglioside GT3 (d18:1(4E)) + CMP + H(+). It carries out the reaction a ganglioside GD1a (d18:1(4E)) + CMP-N-acetyl-beta-neuraminate = a ganglioside GT1a (d18:1(4E)) + CMP + H(+). It catalyses the reaction a ganglioside GM1b (d18:1(4E)) + CMP-N-acetyl-beta-neuraminate = a ganglioside GD1c (d18:1(4E)) + CMP + H(+). The catalysed reaction is a ganglioside GQ1c (d18:1(4E)) + CMP-N-acetyl-beta-neuraminate = a ganglioside GP1c (d18:1(4E)) + CMP + H(+). Its pathway is protein modification; protein glycosylation. In terms of biological role, involved in the synthesis of gangliosides GD1c, GT1a, GQ1b, GP1c and GT3 from GD1a, GT1b, GM1b and GD3 respectively. The protein is Alpha-2,8-sialyltransferase 8E of Homo sapiens (Human).